Consider the following 177-residue polypeptide: Nucleoside-triphosphatase THEP1 (177 aa).

Residues 10 to 17 (GKPGIGKT) and 101 to 108 (CLVIDEIG) contribute to the ATP site.

The protein belongs to the THEP1 NTPase family.

The enzyme catalyses a ribonucleoside 5'-triphosphate + H2O = a ribonucleoside 5'-diphosphate + phosphate + H(+). Functionally, has nucleotide phosphatase activity towards ATP, GTP, CTP, TTP and UTP. May hydrolyze nucleoside diphosphates with lower efficiency. This is Nucleoside-triphosphatase THEP1 from Natranaerobius thermophilus (strain ATCC BAA-1301 / DSM 18059 / JW/NM-WN-LF).